The following is a 265-amino-acid chain: Insulin-like growth factor-binding protein 2-B (265 aa).

The N-terminal stretch at methionine 1–glycine 17 is a signal peptide. The IGFBP N-terminal domain occupies isoleucine 19–lysine 99. 6 cysteine pairs are disulfide-bonded: cysteine 23–cysteine 49, cysteine 26–cysteine 51, cysteine 34–cysteine 52, cysteine 41–cysteine 55, cysteine 63–cysteine 76, and cysteine 70–cysteine 96. A compositionally biased stretch (polar residues) spans threonine 107 to arginine 122. 2 disordered regions span residues threonine 107 to lysine 128 and histidine 144 to glutamine 170. One can recognise a Thyroglobulin type-1 domain in the interval glutamine 166–cysteine 248. 3 disulfide bridges follow: cysteine 169-cysteine 203, cysteine 214-cysteine 225, and cysteine 227-cysteine 248. The segment at serine 238–lysine 265 is disordered. Residues arginine 243–aspartate 245 carry the Cell attachment site motif.

In terms of assembly, interacts with igf2. Interacts with igf1. In early embryos, expressed at a low level in most tissues with expression becoming abundant in the liver by 96 hours post-fertilization (hpf). The expression pattern in adults exhibits sexual dimorphism; in adult males expression is limited exclusively to the liver whereas in adult females expression is observed in the liver and other tissues including the gut, kidney, ovary and muscle.

The protein localises to the secreted. Functionally, IGF-binding proteins prolong the half-life of the IGFs and have been shown to either inhibit or stimulate the growth promoting effects of the IGFs on cell culture. They alter the interaction of IGFs with their cell surface receptors. The sequence is that of Insulin-like growth factor-binding protein 2-B from Danio rerio (Zebrafish).